Reading from the N-terminus, the 288-residue chain is Programmed cell death protein 1 (288 aa).

Residues 1–24 (MWVRQVPWSFTWAVLQLSWQSGWL) form the signal peptide. The Extracellular portion of the chain corresponds to 25-169 (LEVPNGPWRS…PKPEGRFQGM (145 aa)). The 109-residue stretch at 31–139 (PWRSLTFYPA…PKAKIEESPG (109 aa)) folds into the Ig-like V-type domain. N-linked (GlcNAc...) asparagine glycosylation is found at Asn49, Asn58, Asn74, and Asn116. Residues Cys54 and Cys123 are joined by a disulfide bond. Residues 70-77 (LSPSNQTE) are interaction with CD274/PDCD1L1. The chain crosses the membrane as a helical span at residues 170 to 190 (VIGIMSALVGIPVLLLLAWAL). Residues 191-288 (AVFCSTSMSE…HEDGHCSWPL (98 aa)) are Cytoplasmic-facing. The ITIM motif motif lies at 223–228 (VAYEEL). Tyr225 carries the post-translational modification Phosphotyrosine. Lys235 is covalently cross-linked (Glycyl lysine isopeptide (Lys-Gly) (interchain with G-Cter in ubiquitin)). Position 236 is a phosphothreonine; by MAPK3 (Thr236). Residues 247–251 (EYATI) carry the ITSM motif motif. Tyr248 carries the phosphotyrosine modification. A disordered region spans residues 263–288 (GRRGSADGLQGPRPPRHEDGHCSWPL). Residues 277–288 (PRHEDGHCSWPL) show a composition bias toward basic and acidic residues.

Monomer. Interacts with CD274/PDCD1L1. Interacts with CD273/PDCD1LG2. Interacts with FBXO38; leading to ubiquitination and degradation by the proteasome. Post-translationally, ubiquitinated at Lys-235 by the SCF(FBXO38) complex, leading to its proteasomal degradation. Ubiquitinated via 'Lys-48'-linked polyubiquitin chains. Deubiquitinated and thus stabilized by USP5. In terms of processing, tyrosine phosphorylated at Tyr-225 (within ITIM motif) and Tyr-248 (ITSM motif) upon ligand binding. Phosphorylation at Tyr-248 promotes the recruitment of the protein tyrosine phosphatase PTPN11/SHP-2 that mediates dephosphorylation of key TCR proximal signaling molecules, such as ZAP70, PRKCQ/PKCtheta and CD247/CD3zeta. Phosphorylation at Thr-236 promotes the recruitment of the deubiquitinase USP5. As to expression, thymus-specific.

It localises to the cell membrane. Its function is as follows. Inhibitory receptor on antigen activated T-cells that plays a critical role in induction and maintenance of immune tolerance to self. Delivers inhibitory signals upon binding to ligands, such as CD274/PDCD1L1 and CD273/PDCD1LG2. Following T-cell receptor (TCR) engagement, PDCD1 associates with CD3-TCR in the immunological synapse and directly inhibits T-cell activation. Suppresses T-cell activation through the recruitment of PTPN11/SHP-2: following ligand-binding, PDCD1 is phosphorylated within the ITSM motif, leading to the recruitment of the protein tyrosine phosphatase PTPN11/SHP-2 that mediates dephosphorylation of key TCR proximal signaling molecules, such as ZAP70, PRKCQ/PKCtheta and CD247/CD3zeta. The PDCD1-mediated inhibitory pathway is exploited by tumors to attenuate anti-tumor immunity and facilitate tumor survival. This Mus musculus (Mouse) protein is Programmed cell death protein 1.